Consider the following 335-residue polypeptide: Malate dehydrogenase (335 aa).

Residue 11-17 participates in NAD(+) binding; sequence GAAGQIG. Positions 94 and 100 each coordinate substrate. NAD(+) contacts are provided by residues N107, Q114, and 131-133; that span reads VGN. Residues N133 and R167 each contribute to the substrate site. The active-site Proton acceptor is the H192.

This sequence belongs to the LDH/MDH superfamily. MDH type 2 family.

It carries out the reaction (S)-malate + NAD(+) = oxaloacetate + NADH + H(+). Its function is as follows. Catalyzes the reversible oxidation of malate to oxaloacetate. This Bdellovibrio bacteriovorus (strain ATCC 15356 / DSM 50701 / NCIMB 9529 / HD100) protein is Malate dehydrogenase.